The sequence spans 1074 residues: Pleckstrin homology domain-containing family M member 1 (1074 aa).

The region spanning 40-182 (TSEDGDANTM…LSFELSYKSA (143 aa)) is the RUN domain. Disordered stretches follow at residues 214–244 (QRKE…RRNR), 272–336 (LQEN…MFQT), and 382–454 (DEKQ…PPQE). Residue Ser218 is modified to Phosphoserine. Composition is skewed to polar residues over residues 313–329 (SKAQ…NQEP) and 393–404 (PAQSTSDQQPSS). A phosphoserine mark is found at Ser433, Ser436, and Ser491. The segment at 506–526 (GNAQPAPAPAPAPAPAPAPAP) is disordered. Pro residues predominate over residues 511-525 (APAPAPAPAPAPAPA). The 92-residue stretch at 551 to 642 (GLMKLGTVAR…WLDRVREALQ (92 aa)) folds into the PH 1 domain. Positions 649-655 (EDEWVNI) match the LIR motif. The segment at 661 to 680 (AEDAPEAPPDSLPPYSTLLP) is disordered. The interval 672-1074 (LPPYSTLLPE…RKYQEQNVVS (403 aa)) is interaction with RAB7A. The PH 2 domain occupies 701–795 (DAIKESLLYL…WRDLVRKVLA (95 aa)). A Phorbol-ester/DAG-type zinc finger spans residues 1004-1058 (QHVYHCDLCTQRGFICQICHHQDIIFPFEFDTTVRCAECRTVFHQSCQAVVRKGC).

In terms of assembly, interacts (via N- and C-terminus) with RAB7A (GTP-bound form). Simultaneously interacts with RAB7A and ARL8B; bringing about clustering and fusion of late endosomes and lysosomes. Interacts (via RUN domain) with ARL8B (GTP-bound form); the interaction is required for PLEKHM1 localization to lysosomes and for ARL8B function in delivery and degradation of endocytic and autophagic cargo in lysosomes. PLEKHM1 and PLEKHM2 compete for interaction with ARL8B. Interacts with ARL8A; the interaction is weaker than with ARL8B. Interacts with VPS41, VPS11, VPS18, VPS33A and VPS39; indicative for an association with the HOPS complex; the interactions with, at least, VPS41, VPS11, VPS18 and VPS33A require ARL8B. Interacts with GABARAP, GABARAPL, GABARAPL2, MAP1LC3A, MAP1LC3B and MAP1LC3C. Interacts with PAFAH1B. Interacts (via N- and C-terminus) with NDEL1. Interacts (via C-terminus) with MAP3K7. Interacts (via N- and C-terminus) with FAM98A. Interacts (via C-terminus) with DEF8; this interaction is weak but increased in a RAB7A-dependent manner. May interact with sialyl-lex-positive protein.

It localises to the autolysosome membrane. Its subcellular location is the endosome membrane. It is found in the late endosome membrane. The protein localises to the lysosome membrane. Functionally, acts as a multivalent adapter protein that regulates Rab7-dependent and HOPS complex-dependent fusion events in the endolysosomal system and couples autophagic and the endocytic trafficking pathways. Acts as a dual effector of RAB7A and ARL8B that simultaneously binds these GTPases, bringing about clustering and fusion of late endosomes and lysosomes. Required for late stages of endolysosomal maturation, facilitating both endocytosis-mediated degradation of growth factor receptors and autophagosome clearance. Interaction with Arl8b is a crucial factor in the terminal maturation of autophagosomes and to mediate autophagosome-lysosome fusion. Positively regulates lysosome peripheral distribution and ruffled border formation in osteoclasts. May be involved in negative regulation of endocytic transport from early endosome to late endosome/lysosome implicating its association with Rab7. May have a role in sialyl-lex-mediated transduction of apoptotic signals. Involved in bone resorption. In Mus musculus (Mouse), this protein is Pleckstrin homology domain-containing family M member 1.